We begin with the raw amino-acid sequence, 678 residues long: MAGKKLKKGKSGNAAQYITRTQAVRKLQLRLSEFRRLCILKGVHPREPKKKPKGANKTYYHLKDINWLAHEPLLNTFRSIKAHDKKVRKARAKQNKELAKRLAALTPTYRLDHLVKERYPSFVDALRDLDDSLTMVHLFATLPAESKYDIPQRTVQLCRRLALEWQAYVVRSGALRRVFVSVKGYYFQAEILGQSVTWLVPHALSQVLPPDVDYKVMLTFLEFYNTLLQFVNFKLYHNLGAALPSLRVYPLFSQLRYPPVLDPRLEEAAAELAAIMKDIAGMEEEEPEEVDSEAGDEDDDDLPVLDSGTRRRRAAAAGPAPRRWRCWVRTTRTRMTTCRWVSDRAGGACGPGVDPSDEAAVCGSLFRGRVFFLGREVPREPLMLVIRAFGGVAAWDGDGSPHAETDEAVTHQIVDRPKQGHKFLSREYVQPQWVFDSANFRVLMPTDLYAPGTVPPPHLSPFVGEADEDGYTPDFAKTVRRLQDAANAARLRAAGLALKGADGSEFVGEGADGAAAADGEGAAGEDLAAAERQYASELAKEDEEAAMADIMMTRKARKMYNNMKQKEAAKQERVQQLESKKAKLAATGAAGPMGQVKPAAAGKAAAAKAAAPAKVAASGGKGAAAKGKEAPAPAKGKGTPAAKGKEAPAPAKGKGAAAAKEAPAKGGKDAAPAKRQRR.

The span at 283 to 303 (EEEEPEEVDSEAGDEDDDDLP) shows a compositional bias: acidic residues. Residues 283-316 (EEEEPEEVDSEAGDEDDDDLPVLDSGTRRRRAAA) are disordered. The region spanning 361–451 (VCGSLFRGRV…VLMPTDLYAP (91 aa)) is the BRCT domain. The stretch at 552-587 (MTRKARKMYNNMKQKEAAKQERVQQLESKKAKLAAT) forms a coiled coil. Positions 563-678 (MKQKEAAKQE…DAAPAKRQRR (116 aa)) are disordered. A compositionally biased stretch (basic and acidic residues) spans 564–581 (KQKEAAKQERVQQLESKK). Low complexity-rich tracts occupy residues 597–618 (KPAA…VAAS) and 630–661 (APAP…AAKE). Residues 662–672 (APAKGGKDAAP) are compositionally biased toward basic and acidic residues.

Belongs to the pescadillo family.

The protein resides in the nucleus. The protein localises to the nucleolus. It is found in the nucleoplasm. Functionally, required for maturation of ribosomal RNAs and formation of the large ribosomal subunit. This chain is Pescadillo homolog, found in Chlamydomonas reinhardtii (Chlamydomonas smithii).